An 876-amino-acid polypeptide reads, in one-letter code: Alanine--tRNA ligase (876 aa).

H564, H568, C666, and H670 together coordinate Zn(2+).

Belongs to the class-II aminoacyl-tRNA synthetase family. In terms of assembly, homotetramer. Requires Zn(2+) as cofactor.

The protein resides in the cytoplasm. It carries out the reaction tRNA(Ala) + L-alanine + ATP = L-alanyl-tRNA(Ala) + AMP + diphosphate. In terms of biological role, catalyzes the attachment of alanine to tRNA(Ala) in a two-step reaction: alanine is first activated by ATP to form Ala-AMP and then transferred to the acceptor end of tRNA(Ala). Also edits incorrectly charged Ser-tRNA(Ala) and Gly-tRNA(Ala) via its editing domain. The chain is Alanine--tRNA ligase from Salmonella typhimurium (strain LT2 / SGSC1412 / ATCC 700720).